The primary structure comprises 101 residues: Replication restart protein PriB (101 aa).

Residues 1–101 (MTTNNLVLSG…IHAENVELKT (101 aa)) enclose the SSB domain.

It belongs to the PriB family. Homodimer. Interacts with PriA and DnaT. Component of the replication restart primosome. Primosome assembly occurs via a 'hand-off' mechanism. PriA binds to replication forks, subsequently PriB then DnaT bind; DnaT then displaces ssDNA to generate the helicase loading substrate.

Its function is as follows. Involved in the restart of stalled replication forks, which reloads the replicative helicase on sites other than the origin of replication; the PriA-PriB pathway is the major replication restart pathway. During primosome assembly it facilitates complex formation between PriA and DnaT on DNA; stabilizes PriA on DNA. Stimulates the DNA unwinding activity of PriA helicase. The chain is Replication restart protein PriB from Shewanella baltica (strain OS223).